The following is a 371-amino-acid chain: Deoxyhypusine synthase (371 aa).

NAD(+) is bound by residues 107–111 (SNLIS), 133–135 (TTG), Glu-139, and Asp-240. 138–139 (EE) is a spermidine binding site. Asp-245 serves as a coordination point for spermidine. Gly-287 contributes to the NAD(+) binding site. His-292 lines the spermidine pocket. 312–313 (TA) contributes to the NAD(+) binding site. Spermidine is bound by residues 318–320 (GSD) and 327–333 (EAVSWGK). Lys-333 functions as the Nucleophile in the catalytic mechanism. 346–347 (DA) lines the NAD(+) pocket.

Belongs to the deoxyhypusine synthase family. The cofactor is NAD(+). In terms of tissue distribution, expressed in shoot tips.

The enzyme catalyses [eIF5A protein]-L-lysine + spermidine = [eIF5A protein]-deoxyhypusine + propane-1,3-diamine. It functions in the pathway protein modification; eIF5A hypusination. Catalyzes the NAD-dependent oxidative cleavage of spermidine and the subsequent transfer of the butylamine moiety of spermidine to the epsilon-amino group of a specific lysine residue of the eIF-5A precursor protein to form the intermediate deoxyhypusine residue. Also able to produce homospermidine from putrescine. This chain is Deoxyhypusine synthase (DHS1), found in Senecio vernalis (Spring groundsel).